A 267-amino-acid polypeptide reads, in one-letter code: MIKEYLKKPSLSDVQLTRDTRNIPIGKVGVKDISYPIVVMDKNKSFQNTIARINMYVDLPHHFKGTHMSRFVEILNEYREEIALDKLELILSTMKEKLGASNAHLEMEFPYFVEKTAPVSRAKSLMEYTCTFSASLSDRFDFVLGIKVPVTSLCPCSKELSSYGAHNQRSIMTVQVRYSEFIWIEDLIDIIEECGSSPVYSLLKREDEKFVTERAYENPRFVEDMVREATVRLLNMQNISWFSVEAENFESIHKHSAYAAIERSRES.

Belongs to the GTP cyclohydrolase IV family.

The catalysed reaction is GTP + H2O = 7,8-dihydroneopterin 3'-triphosphate + formate + H(+). Its pathway is cofactor biosynthesis; 7,8-dihydroneopterin triphosphate biosynthesis; 7,8-dihydroneopterin triphosphate from GTP: step 1/1. In terms of biological role, converts GTP to 7,8-dihydroneopterin triphosphate. The polypeptide is GTP cyclohydrolase FolE2 (Geobacter sp. (strain M21)).